The chain runs to 61 residues: MAKKSLKIKQARTQKYSTREYSRCKICGRPHAYLRKFGVCRICFRELAYKGQIPGVRKASW.

Residues Cys24, Cys27, Cys40, and Cys43 each coordinate Zn(2+).

The protein belongs to the universal ribosomal protein uS14 family. Zinc-binding uS14 subfamily. As to quaternary structure, part of the 30S ribosomal subunit. Contacts proteins S3 and S10. Zn(2+) serves as cofactor.

Binds 16S rRNA, required for the assembly of 30S particles and may also be responsible for determining the conformation of the 16S rRNA at the A site. This chain is Small ribosomal subunit protein uS14, found in Alkaliphilus metalliredigens (strain QYMF).